The following is a 183-amino-acid chain: Capsid protein (183 aa).

The interval 136–183 (NAPILSTLPETTVVRRRGRSPRRRTPSPRRRRSQSPRRRRSQSRESQC) is disordered. Basic residues predominate over residues 149–176 (VRRRGRSPRRRTPSPRRRRSQSPRRRRS). Residues Ser155, Ser162, and Ser170 each carry the phosphoserine; by host modification. The stretch at 155–161 (SPRRRTP) is one 1; half-length repeat. The interval 155-177 (SPRRRTPSPRRRRSQSPRRRRSQ) is 3 X 8 AA repeats of S-P-R-R-R-[PR]-S-Q. The short motif at 158–175 (RRTPSPRRRRSQSPRRRR) is the Bipartite nuclear localization signal element. 2 tandem repeats follow at residues 162-169 (SPRRRRSQ) and 170-177 (SPRRRRSQ). Residues 177–183 (QSRESQC) are RNA binding.

It belongs to the orthohepadnavirus core antigen family. As to quaternary structure, homodimerizes, then multimerizes. Interacts with cytosol exposed regions of viral L glycoprotein present in the reticulum-to-Golgi compartment. Interacts with human FLNB. Phosphorylated form interacts with host importin alpha; this interaction depends on the exposure of the NLS, which itself depends upon genome maturation and/or phosphorylation of the capsid protein. Interacts with host NUP153. Phosphorylated by host SRPK1, SRPK2, and maybe protein kinase C or GAPDH. Phosphorylation is critical for pregenomic RNA packaging. Protein kinase C phosphorylation is stimulated by HBx protein and may play a role in transport of the viral genome to the nucleus at the late step during the viral replication cycle.

It is found in the virion. Its subcellular location is the host cytoplasm. Functionally, self assembles to form an icosahedral capsid. Most capsids appear to be large particles with an icosahedral symmetry of T=4 and consist of 240 copies of capsid protein, though a fraction forms smaller T=3 particles consisting of 180 capsid proteins. Entering capsids are transported along microtubules to the nucleus. Phosphorylation of the capsid is thought to induce exposure of nuclear localization signal in the C-terminal portion of the capsid protein that allows binding to the nuclear pore complex via the importin (karyopherin-) alpha and beta. Capsids are imported in intact form through the nuclear pore into the nuclear basket, where it probably binds NUP153. Only capsids that contain the mature viral genome can release the viral DNA and capsid protein into the nucleoplasm. Immature capsids get stuck in the basket. Capsids encapsulate the pre-genomic RNA and the P protein. Pre-genomic RNA is reverse-transcribed into DNA while the capsid is still in the cytoplasm. The capsid can then either be directed to the nucleus, providing more genomes for transcription, or bud through the endoplasmic reticulum to provide new virions. This chain is Capsid protein, found in Homo sapiens (Human).